A 132-amino-acid polypeptide reads, in one-letter code: Small integral membrane protein 33 (132 aa).

The tract at residues 1–28 is disordered; it reads MHQAGHYSWPSPAVNSSSEQEPQRQLPE. Asn15 carries an N-linked (GlcNAc...) asparagine glycan. Residues 43–63 form a helical membrane-spanning segment; it reads PVVTVIVAVFVLLAVCIIVAV. The segment at 99 to 132 is disordered; it reads PQDSPEEAPPGPLVPGSCPAPDGPRPSIDEVTCL.

Its subcellular location is the membrane. The protein is Small integral membrane protein 33 of Homo sapiens (Human).